Reading from the N-terminus, the 232-residue chain is Large ribosomal subunit protein uL1 (232 aa).

It belongs to the universal ribosomal protein uL1 family. As to quaternary structure, part of the 50S ribosomal subunit.

Functionally, binds directly to 23S rRNA. The L1 stalk is quite mobile in the ribosome, and is involved in E site tRNA release. In terms of biological role, protein L1 is also a translational repressor protein, it controls the translation of the L11 operon by binding to its mRNA. The polypeptide is Large ribosomal subunit protein uL1 (Stenotrophomonas maltophilia (strain K279a)).